Here is a 64-residue protein sequence, read N- to C-terminus: Large ribosomal subunit protein bL35 (64 aa).

It belongs to the bacterial ribosomal protein bL35 family.

The sequence is that of Large ribosomal subunit protein bL35 from Chlorobium limicola (strain DSM 245 / NBRC 103803 / 6330).